The following is a 166-amino-acid chain: uncharacterized protein (166 aa).

The 63-residue stretch at 3–65 (LTEKETEILE…IDWRKVDGHE (63 aa)) folds into the HTH asnC-type domain. The segment at residues 22 to 41 (LETIAKMAGIPVNEVKTIID) is a DNA-binding region (H-T-H motif).

This is an uncharacterized protein from Bacillus subtilis (strain 168).